Consider the following 409-residue polypeptide: Magnesium-protoporphyrin IX monomethyl ester [oxidative] cyclase, chloroplastic (409 aa).

2 disordered regions span residues Met1–Ser23 and Arg36–Glu60. The N-terminal 36 residues, Met1–Arg36, are a transit peptide targeting the chloroplast. Residues Lys13 to Ser23 show a composition bias toward polar residues.

This sequence belongs to the AcsF family. As to quaternary structure, part of the FLU-containing chloroplast membrane complex composed of FLU, CRD1, PORB, PORC, CHLP and HEMA1. Interacts with YCF54 in chloroplasts. Fe cation serves as cofactor.

It is found in the plastid. The protein localises to the chloroplast inner membrane. It localises to the chloroplast thylakoid membrane. The catalysed reaction is Mg-protoporphyrin IX 13-monomethyl ester + 3 NADPH + 3 O2 + 2 H(+) = 3,8-divinyl protochlorophyllide a + 3 NADP(+) + 5 H2O. The protein operates within porphyrin-containing compound metabolism; chlorophyll biosynthesis. Catalytic component of the MgProto monomethylester (MgProtoME) cyclase complex that catalyzes the formation of the isocyclic ring in chlorophyll biosynthesis. Mediates the cyclase reaction, which results in the formation of divinylprotochlorophyllide (Pchlide) characteristic of all chlorophylls from magnesium-protoporphyrin IX 13-monomethyl ester (MgPMME). The polypeptide is Magnesium-protoporphyrin IX monomethyl ester [oxidative] cyclase, chloroplastic (Arabidopsis thaliana (Mouse-ear cress)).